Here is a 107-residue protein sequence, read N- to C-terminus: Phosphoribosyl-ATP pyrophosphatase (107 aa).

This sequence belongs to the PRA-PH family.

Its subcellular location is the cytoplasm. It catalyses the reaction 1-(5-phospho-beta-D-ribosyl)-ATP + H2O = 1-(5-phospho-beta-D-ribosyl)-5'-AMP + diphosphate + H(+). The protein operates within amino-acid biosynthesis; L-histidine biosynthesis; L-histidine from 5-phospho-alpha-D-ribose 1-diphosphate: step 2/9. The sequence is that of Phosphoribosyl-ATP pyrophosphatase from Methylobacterium radiotolerans (strain ATCC 27329 / DSM 1819 / JCM 2831 / NBRC 15690 / NCIMB 10815 / 0-1).